The primary structure comprises 397 residues: Lysophospholipid transporter LplT (397 aa).

Residues 1 to 17 lie on the Periplasmic side of the membrane; that stretch reads MSESVHTNTSLWSKGMK. A helical membrane pass occupies residues 18–38; the sequence is AVIVAQFLSAFGDNALLFATL. The Cytoplasmic portion of the chain corresponds to 39–52; it reads ALLKAQFYPEWSQP. The chain crosses the membrane as a helical span at residues 53–73; the sequence is ILQMVFVGAYILFAPFVGQVA. Residues 74 to 90 are Periplasmic-facing; that stretch reads DSFAKGRVMMFANGLKL. The chain crosses the membrane as a helical span at residues 91 to 111; sequence LGAASICFGINPFLGYTLVGV. The Cytoplasmic portion of the chain corresponds to 112-144; sequence GAAAYSPAKYGILGELTTGSKLVKANGLMEAST. The chain crosses the membrane as a helical span at residues 145 to 165; that stretch reads IAAILLGSVAGGVLADWHVLV. Ala166 is a topological domain (periplasmic). A helical transmembrane segment spans residues 167–187; it reads LAACALAYGGAVVANIYIPKL. Residues 188–226 are Cytoplasmic-facing; sequence AAARPGQSWNLINMTRSFLNACTSLWRNGETRFSLVGTS. Residues 227-247 traverse the membrane as a helical segment; it reads LFWGAGVTLRFLLVLWVPVAL. Topologically, residues 248-256 are periplasmic; the sequence is GITDNATPT. Residues 257-277 traverse the membrane as a helical segment; that stretch reads YLNAMVAIGIVVGAGAAAKLV. Residues 278 to 280 are Cytoplasmic-facing; that stretch reads TLE. The helical transmembrane segment at 281 to 301 threads the bilayer; the sequence is TVSRCMPAGILIGVVVLIFSL. Over 302-304 the chain is Periplasmic; it reads QHE. A helical membrane pass occupies residues 305-325; that stretch reads QLPAYALLMLIGVLGGFFVVP. The Cytoplasmic segment spans residues 326 to 343; sequence LNALLQERGKKSVGAGNA. A helical transmembrane segment spans residues 344–364; it reads IAVQNLGENSAMLLMLGIYSL. Residues 365 to 366 lie on the Periplasmic side of the membrane; sequence AV. A helical transmembrane segment spans residues 367 to 387; sequence MVGIPVVPIGIGFGALFALAI. Residues 388-397 are Cytoplasmic-facing; sequence TALWIWQRRH.

The protein belongs to the major facilitator superfamily. LplT (TC 2.A.1.42) family.

The protein resides in the cell inner membrane. In terms of biological role, catalyzes the facilitated diffusion of 2-acyl-glycero-3-phosphoethanolamine (2-acyl-GPE) into the cell. The protein is Lysophospholipid transporter LplT of Escherichia coli O157:H7 (strain EC4115 / EHEC).